The sequence spans 420 residues: POU domain, class 4, transcription factor 1 (420 aa).

A POU-IV box motif is present at residues 57–66; it reads RAEALAAVDI. Disordered regions lie at residues 94 to 117 and 132 to 200; these read STVP…GDLL and GGAG…XGHL. Positions 99 to 108 are enriched in basic residues; the sequence is AHHHHHHHHH. Gly residues-rich tracts occupy residues 132-165 and 172-184; these read GGAG…GPGV and PGGG…GGLL. In terms of domain architecture, POU-specific spans 261–338; it reads DSDTDPRELE…ILQAWLEEAE (78 aa). The segment at residues 356-415 is a DNA-binding region (homeobox); it reads KKRKRTSIAAPEKRSLEAYFAVQPRPSSEKIAAIAEKLDLKKNVVRVWFCNQRQKQKRMK.

The protein belongs to the POU transcription factor family. Class-4 subfamily. As to quaternary structure, interacts (via N-terminus) with RIT2; the interaction controls POU4F1 transactivation activity on some neuronal target genes. Isoform 1 interacts with POU4F2; this interaction inhibits both POU4F1 DNA-binding and transcriptional activities. Isoform 1 interacts (C-terminus) with ESR1 (via DNA-binding domain); this interaction decreases the estrogen receptor ESR1 transcriptional activity in a DNA- and ligand 17-beta-estradiol-independent manner. As to expression, detected in brain, spinal cord and dorsal root ganglion. Isoform 2 is detected in brain, spinal cord, dorsal root ganglion and spleen.

Its subcellular location is the nucleus. The protein localises to the cytoplasm. Functionally, multifunctional transcription factor with different regions mediating its different effects. Acts by binding (via its C-terminal domain) to sequences related to the consensus octamer motif 5'-ATGCAAAT-3' in the regulatory regions of its target genes. Regulates the expression of specific genes involved in differentiation and survival within a subset of neuronal lineages. It has been shown that activation of some of these genes requires its N-terminal domain, maybe through a neuronal-specific cofactor. Activates BCL2 expression and protects neuronal cells from apoptosis (via the N-terminal domain). Induces neuronal process outgrowth and the coordinate expression of genes encoding synaptic proteins. Exerts its major developmental effects in somatosensory neurons and in brainstem nuclei involved in motor control. Stimulates the binding affinity of the nuclear estrogene receptor ESR1 to DNA estrogen response element (ERE), and hence modulates ESR1-induced transcriptional activity. May positively regulate POU4F2 and POU4F3. Regulates dorsal root ganglion sensory neuron specification and axonal projection into the spinal cord. Plays a role in TNFSF11-mediated terminal osteoclast differentiation. Negatively regulates its own expression interacting directly with a highly conserved autoregulatory domain surrounding the transcription initiation site. In terms of biological role, able to act as transcription factor, cannot regulate the expression of the same subset of genes than isoform 1. Does not have anitapoptotic effect on neuronal cells. This is POU domain, class 4, transcription factor 1 (Pou4f1) from Rattus norvegicus (Rat).